The chain runs to 424 residues: Serine/threonine-protein kinase H1 (424 aa).

Gly-2 carries the N-myristoyl glycine lipid modification. The S-palmitoyl cysteine moiety is linked to residue Cys-3. The interval 49 to 81 (KGGFPAASQGANPSPGTPRTSHTEPPSEPPRRA) is disordered. A compositionally biased stretch (polar residues) spans 57–72 (QGANPSPGTPRTSHTE). The region spanning 98-355 (YDIKALIGRG…ALQALRHPWV (258 aa)) is the Protein kinase domain. Residues 104-112 (IGRGSFSRV) and Lys-127 contribute to the ATP site. Catalysis depends on Asp-218, which acts as the Proton acceptor. Residues 378-407 (RASSRCQSTKSAQSTRSSRSTRSNKSRRVR) form a disordered region. 2 positions are modified to phosphoserine; by autocatalysis: Ser-380 and Ser-381. A compositionally biased stretch (low complexity) spans 385–398 (STKSAQSTRSSRST).

Belongs to the protein kinase superfamily. CAMK Ser/Thr protein kinase family. In terms of assembly, homodimer. In terms of processing, autophosphorylated on serine residues. Myristoylated. Required for membrane association. Prerequisite for palmitoylation to occur. Post-translationally, palmitoylated.

It is found in the golgi apparatus. The protein localises to the cytoplasm. Its subcellular location is the cytoskeleton. It localises to the microtubule organizing center. The protein resides in the centrosome. It is found in the nucleus speckle. The protein localises to the endoplasmic reticulum membrane. Its subcellular location is the cell membrane. The catalysed reaction is L-seryl-[protein] + ATP = O-phospho-L-seryl-[protein] + ADP + H(+). It catalyses the reaction L-threonyl-[protein] + ATP = O-phospho-L-threonyl-[protein] + ADP + H(+). Activity depends on Ca(2+) concentration. Its function is as follows. May be a SFC-associated serine kinase (splicing factor compartment-associated serine kinase) with a role in intranuclear SR protein (non-snRNP splicing factors containing a serine/arginine-rich domain) trafficking and pre-mRNA processing. In Bos taurus (Bovine), this protein is Serine/threonine-protein kinase H1 (PSKH1).